Consider the following 248-residue polypeptide: Mannose-binding protein C (248 aa).

The N-terminal stretch at 1-20 (MSLFPSLPLLLLSMVAASYS) is a signal peptide. Residues 42–99 (GINGFPGKDGRDGTKGEKGEPGQGLRGLQGPPGKLGPPGNPGPSGSPGPKGQKGDPGK) enclose the Collagen-like domain. Residues 43 to 113 (INGFPGKDGR…DSSLAASERK (71 aa)) form a disordered region. Pro47 is modified (hydroxyproline). Positions 49-61 (KDGRDGTKGEKGE) are enriched in basic and acidic residues. Hydroxyproline occurs at positions 73, 79, 82, and 88. Residues 75–87 (KLGPPGNPGPSGS) show a composition bias toward pro residues. Over residues 93–102 (QKGDPGKSPD) the composition is skewed to basic and acidic residues. A coiled-coil region spans residues 112-130 (RKALQTEMARIKKWLTFSL). The region spanning 134 to 245 (VGNKFFLTNG…CSTSHLAVCE (112 aa)) is the C-type lectin domain. Disulfide bonds link Cys155/Cys244 and Cys222/Cys236.

Oligomeric complex of 3 or more homotrimers. Interacts with MASP1 and MASP2. Interacts with MEP1A and MEP1B and may inhibit their catalytic activity. Interacts with CR1 (via Sushi 24 and Sushi 25 domains). In terms of assembly, (Microbial infection) Interacts with SARS coronavirus-2/SARS-CoV-2 Spike glycoprotein homotrimer; the interaction is calcium-dependent and modulated by Spike glycoprotein glycosylation state. As to expression, plasma protein produced mainly in the liver.

The protein localises to the secreted. Its function is as follows. Calcium-dependent lectin involved in innate immune defense. Binds mannose, fucose and N-acetylglucosamine on different microorganisms and activates the lectin complement pathway. Binds to late apoptotic cells, as well as to apoptotic blebs and to necrotic cells, but not to early apoptotic cells, facilitating their uptake by macrophages. May bind DNA. Upon SARS coronavirus-2/SARS-CoV-2 infection, activates the complement lectin pathway which leads to the inhibition SARS-CoV-2 infection and a reduction of the induced inflammatory response. This Homo sapiens (Human) protein is Mannose-binding protein C.